The chain runs to 158 residues: Xanthine-guanine phosphoribosyltransferase (158 aa).

5-phospho-alpha-D-ribose 1-diphosphate-binding positions include 38 to 39 and 90 to 98; these read RG and DDLVDTGGT. D91 contacts Mg(2+). Guanine contacts are provided by D94 and I137. Xanthine contacts are provided by D94 and I137. GMP is bound by residues 94 to 98 and 136 to 137; these read DTGGT and WI.

The protein belongs to the purine/pyrimidine phosphoribosyltransferase family. XGPT subfamily. Homotetramer. The cofactor is Mg(2+).

The protein localises to the cell inner membrane. The catalysed reaction is GMP + diphosphate = guanine + 5-phospho-alpha-D-ribose 1-diphosphate. It carries out the reaction XMP + diphosphate = xanthine + 5-phospho-alpha-D-ribose 1-diphosphate. The enzyme catalyses IMP + diphosphate = hypoxanthine + 5-phospho-alpha-D-ribose 1-diphosphate. It functions in the pathway purine metabolism; GMP biosynthesis via salvage pathway; GMP from guanine: step 1/1. The protein operates within purine metabolism; XMP biosynthesis via salvage pathway; XMP from xanthine: step 1/1. Functionally, purine salvage pathway enzyme that catalyzes the transfer of the ribosyl-5-phosphate group from 5-phospho-alpha-D-ribose 1-diphosphate (PRPP) to the N9 position of the 6-oxopurines guanine and xanthine to form the corresponding ribonucleotides GMP (guanosine 5'-monophosphate) and XMP (xanthosine 5'-monophosphate), with the release of PPi. To a lesser extent, also acts on hypoxanthine. This is Xanthine-guanine phosphoribosyltransferase from Buchnera aphidicola subsp. Acyrthosiphon pisum (strain APS) (Acyrthosiphon pisum symbiotic bacterium).